The sequence spans 193 residues: Xanthine phosphoribosyltransferase (193 aa).

Xanthine contacts are provided by Leu-20 and Thr-27. 128–132 (ANGQA) is a 5-phospho-alpha-D-ribose 1-diphosphate binding site. Xanthine is bound at residue Lys-156.

Belongs to the purine/pyrimidine phosphoribosyltransferase family. Xpt subfamily. As to quaternary structure, homodimer.

Its subcellular location is the cytoplasm. It carries out the reaction XMP + diphosphate = xanthine + 5-phospho-alpha-D-ribose 1-diphosphate. It functions in the pathway purine metabolism; XMP biosynthesis via salvage pathway; XMP from xanthine: step 1/1. Its function is as follows. Converts the preformed base xanthine, a product of nucleic acid breakdown, to xanthosine 5'-monophosphate (XMP), so it can be reused for RNA or DNA synthesis. This chain is Xanthine phosphoribosyltransferase, found in Streptococcus gordonii (strain Challis / ATCC 35105 / BCRC 15272 / CH1 / DL1 / V288).